Here is a 204-residue protein sequence, read N- to C-terminus: Ribonuclease HII (204 aa).

Positions 1–197 (MTLGIDEAGR…KNRILNPKLL (197 aa)) constitute an RNase H type-2 domain. A divalent metal cation is bound by residues Asp6, Glu7, and Asp103.

It belongs to the RNase HII family. The cofactor is Mn(2+). Mg(2+) is required as a cofactor.

It is found in the cytoplasm. It carries out the reaction Endonucleolytic cleavage to 5'-phosphomonoester.. In terms of biological role, endonuclease that specifically degrades the RNA of RNA-DNA hybrids. The sequence is that of Ribonuclease HII from Helicobacter pylori (strain HPAG1).